The sequence spans 390 residues: Chalcone synthase (390 aa).

Cysteine 164 is a catalytic residue.

The protein belongs to the thiolase-like superfamily. Chalcone/stilbene synthases family.

The catalysed reaction is (E)-4-coumaroyl-CoA + 3 malonyl-CoA + 3 H(+) = 2',4,4',6'-tetrahydroxychalcone + 3 CO2 + 4 CoA. Its pathway is secondary metabolite biosynthesis; flavonoid biosynthesis. Its function is as follows. The primary product of this enzyme is 4,2',4',6'-tetrahydroxychalcone (also termed naringenin-chalcone or chalcone) which undergoes enzyme-catalyzed or spontaneous isomerization into naringenin. This is Chalcone synthase from Hypericum androsaemum (Tutsan).